A 78-amino-acid chain; its full sequence is Small ribosomal subunit protein uS17 (78 aa).

This sequence belongs to the universal ribosomal protein uS17 family. Part of the 30S ribosomal subunit.

One of the primary rRNA binding proteins, it binds specifically to the 5'-end of 16S ribosomal RNA. In Sinorhizobium fredii (strain NBRC 101917 / NGR234), this protein is Small ribosomal subunit protein uS17.